The sequence spans 444 residues: Glutamate--tRNA ligase 1 (444 aa).

The short motif at 8–18 (PSPTGFLHVGN) is the 'HIGH' region element. Positions 239-243 (KISKR) match the 'KMSKS' region motif. Lysine 242 provides a ligand contact to ATP.

The protein belongs to the class-I aminoacyl-tRNA synthetase family. Glutamate--tRNA ligase type 1 subfamily. Monomer.

It is found in the cytoplasm. It carries out the reaction tRNA(Glu) + L-glutamate + ATP = L-glutamyl-tRNA(Glu) + AMP + diphosphate. In terms of biological role, catalyzes the attachment of glutamate to tRNA(Glu) in a two-step reaction: glutamate is first activated by ATP to form Glu-AMP and then transferred to the acceptor end of tRNA(Glu). In Zymomonas mobilis subsp. mobilis (strain ATCC 31821 / ZM4 / CP4), this protein is Glutamate--tRNA ligase 1.